We begin with the raw amino-acid sequence, 284 residues long: 2,3,4,5-tetrahydropyridine-2,6-dicarboxylate N-succinyltransferase (284 aa).

Substrate is bound by residues arginine 111 and aspartate 148.

Belongs to the transferase hexapeptide repeat family. In terms of assembly, homotrimer.

The protein resides in the cytoplasm. It catalyses the reaction (S)-2,3,4,5-tetrahydrodipicolinate + succinyl-CoA + H2O = (S)-2-succinylamino-6-oxoheptanedioate + CoA. It participates in amino-acid biosynthesis; L-lysine biosynthesis via DAP pathway; LL-2,6-diaminopimelate from (S)-tetrahydrodipicolinate (succinylase route): step 1/3. This Brucella suis (strain ATCC 23445 / NCTC 10510) protein is 2,3,4,5-tetrahydropyridine-2,6-dicarboxylate N-succinyltransferase.